A 359-amino-acid chain; its full sequence is Probable D-xylulose reductase A (359 aa).

3 residues coordinate Zn(2+): C47, H72, and E73. Residue 182-187 participates in NAD(+) binding; it reads GAGPVG.

Belongs to the zinc-containing alcohol dehydrogenase family. Zn(2+) serves as cofactor.

The catalysed reaction is xylitol + NAD(+) = D-xylulose + NADH + H(+). It participates in carbohydrate degradation; L-arabinose degradation via L-arabinitol; D-xylulose 5-phosphate from L-arabinose (fungal route): step 4/5. Functionally, xylitol dehydrogenase which catalyzes the conversion of xylitol to D-xylulose. Xylose is a major component of hemicelluloses such as xylan. Most fungi utilize D-xylose via three enzymatic reactions, xylose reductase (XR), xylitol dehydrogenase (XDH), and xylulokinase, to form xylulose 5-phosphate, which enters pentose phosphate pathway. This is Probable D-xylulose reductase A (xdhA) from Emericella nidulans (strain FGSC A4 / ATCC 38163 / CBS 112.46 / NRRL 194 / M139) (Aspergillus nidulans).